Consider the following 800-residue polypeptide: MEPIVKQENPVTTSTLSTWKPAARNKTIPPPESVIELSSSNEGSELGENLDEIAEIQSVDRTGGDDVSGTKRARSDSIASPAKRLAVMIPDDDEEFLLSTTSGQAILALPATPCNVVAAPSSWGSCKQFWKAGDYEGTSGGDWEVSAGGFDHVRVHPKFLHSNATSHKWSLGAFAELLDNALDEVRSGATFVNVDMIQNRKDGSKMILIEDNGGGMNPEKMRHCMSLGYSAKSKLADTIGQYGNGFKTSTMRLGADVIVFSRCLGKDGKSSTQSIGLLSYTFLKSTGKEDIVVPMLDYERRDSEWCPITRSSVSDWEKNVETVVQWSPYATEEELLCQFNLMKKHGTRIIIYNLWEDDEGMLELDFDTDPHDIQLRGVNRDDKNIVMASQFPNSRHYLTYKHSLRSYASILYLKISHEFRIILRGKDVEHHNIVNDMMQTEKITYRPKEAADVSQLSAVVTIGFVKDAKHHVDVQGFNVYHKNRLIKPFWRIWNAAGSDGRGVIGVLEANFVEPAHDKQGFERTTVLSRLEARLLHMQKDYWRSKCHKIGYAKRQGRKSAKDTEKDTEDRESSPEFDPKGSASSRKRTVPSSFKTPTAAPRFNTPTAASEKFNPRSNVNGGGKGSVKVSKDIGYKSSEKGGKLGNSFSKSNKRAKPQGARAVEVTNSDDDYDCDSSPERNVTELPGKSSELPKPQSGPRTLSQLEQENNELRERLDKKEEVFLLLQKDLRRERELRKTLEAEVETLKNKLKEMDKEQASLIDVFAEDRDRRDKEEENLRIKLEEASNTIQKLIDGKARGR.

Disordered regions lie at residues 1–76 and 552–702; these read MEPI…ARSD and AKRQ…RTLS. Polar residues predominate over residues 9–18; the sequence is NPVTTSTLST. The segment covering 36–47 has biased composition (low complexity); the sequence is ELSSSNEGSELG. 2 stretches are compositionally biased toward basic and acidic residues: residues 559-578 and 628-641; these read SAKDTEKDTEDRESSPEFDP and VSKDIGYKSSEKGG. Residues 666 to 675 are compositionally biased toward acidic residues; the sequence is NSDDDYDCDS. Residues 699-766 are a coiled coil; it reads RTLSQLEQEN…QASLIDVFAE (68 aa). Short sequence motifs (nuclear localization signal) lie at residues 716 to 723 and 735 to 742; these read DKKEEVFL and LRKTLEAE.

It belongs to the MORC ATPase protein family. Homodimer and heterodimer. Component of an RNA-directed DNA methylation (RdDM) complex. Forms homomeric complexes. Mg(2+) is required as a cofactor. Mn(2+) serves as cofactor.

It is found in the nucleus. Functionally, exhibits ATPase activity. Binds DNA/RNA in a non-specific manner and exhibits endonuclease activity. Probably involved in DNA repair. Involved in RNA-directed DNA methylation (RdDM) as a component of the RdDM machinery and required for gene silencing. May also be involved in the regulation of chromatin architecture to maintain gene silencing. Together with MORC7, acts to suppress a wide set of non-methylated protein-coding genes, especially involved in pathogen response. Positive regulator of defense against the oomycete Hyaloperonospora arabidopsidis (Hpa). The protein is Protein MICRORCHIDIA 4 of Arabidopsis thaliana (Mouse-ear cress).